Here is a 3432-residue protein sequence, read N- to C-terminus: Genome polyprotein (3432 aa).

Residues 2-15 are interaction with host EXOC1; it reads TKKPGGPGKNRAIN. Topologically, residues 2-109 are cytoplasmic; it reads TKKPGGPGKN…RKQNKRGGNE (108 aa). Positions 37 to 72 are hydrophobic; homodimerization of capsid protein C; it reads LLDGRGPVRFVLALITFFKFTALAPTKALLGRWKAV. The propeptide at 106-127 is ER anchor for the capsid protein C, removed in mature form by serine protease NS3; the sequence is GGNEGSIMWLASLAVVIACAGA. A helical transmembrane segment spans residues 110 to 130; that stretch reads GSIMWLASLAVVIACAGAMKL. The Extracellular portion of the chain corresponds to 131 to 253; sequence SNFQGKLLMT…ATRYLMKTEN (123 aa). A glycan (N-linked (GlcNAc...) asparagine; by host) is linked at N142. A helical transmembrane segment spans residues 254 to 274; sequence WIIRNPGYAFLAAVLGWMLGS. Topologically, residues 275-279 are cytoplasmic; that stretch reads NNGQR. Residues 280–294 traverse the membrane as a helical segment; that stretch reads VVFTILLLLVAPAYS. The Extracellular segment spans residues 295–746; sequence FNCLGMGNRD…QVFGGAFRTL (452 aa). Cystine bridges form between C297–C324, C354–C410, C354–C415, C368–C399, C386–C410, and C386–C415. The segment at 392–405 is fusion peptide; the sequence is DRGWGNGCGLFGKG. The N-linked (GlcNAc...) asparagine; by host glycan is linked to N448. Cystine bridges form between C484–C581 and C598–C629. Residues 747-767 traverse the membrane as a helical segment; the sequence is FGGMSWITQGLMGALLLWMGV. Residues 768–773 lie on the Cytoplasmic side of the membrane; that stretch reads NARDRS. Residues 774 to 794 form a helical membrane-spanning segment; that stretch reads IALAFLATGGVLVFLATNVHA. Residues 795-1219 lie on the Extracellular side of the membrane; the sequence is DTGCAIDITR…AFAEANSGGD (425 aa). 6 cysteine pairs are disulfide-bonded: C798-C809, C849-C937, C973-C1017, C1074-C1123, C1085-C1106, and C1107-C1110. N-linked (GlcNAc...) asparagine; by host glycosylation is found at N924 and N1001. The helical transmembrane segment at 1220–1240 threads the bilayer; sequence VLHLALIAVFKIQPAFLVMNM. The Cytoplasmic portion of the chain corresponds to 1241 to 1250; it reads LSTRWTNQEN. A helical transmembrane segment spans residues 1251–1271; that stretch reads VVLVLGAAFFQLASVDLQIGV. Position 1272 (H1272) is a topological domain, lumenal. The chain crosses the membrane as a helical span at residues 1273-1293; the sequence is GILNAAAIAWMIVRAITFPTT. At 1294–1309 the chain is on the cytoplasmic side; sequence SSVTMPVLALLTPGMR. A helical membrane pass occupies residues 1310 to 1330; it reads ALYLDTYRIILLVIGICSLLH. The Lumenal portion of the chain corresponds to 1331 to 1341; the sequence is ERKKTMAKKKG. Residues 1342-1362 form a helical membrane-spanning segment; sequence AVLLGLALTSTGWFSPTTIAA. Over 1363-1374 the chain is Cytoplasmic; that stretch reads GLMVCNPNKKRG. Residues 1375-1395 form a helical membrane-spanning segment; the sequence is WPATEFLSAVGLMFAIVGGLA. Topologically, residues 1396-1398 are lumenal; that stretch reads ELD. Residues 1399 to 1419 form a helical membrane-spanning segment; sequence IESMSIPFMLAGLMAVSYVVS. Topologically, residues 1420-1476 are cytoplasmic; it reads GKATDMWLERAADISWEMDAAITGSSRRLDVKLDDDGDFHLIDDPGVPWKVWVLRMS. The tract at residues 1427–1466 is interacts with and activates NS3 protease; sequence LERAADISWEMDAAITGSSRRLDVKLDDDGDFHLIDDPGV. Residues 1477–1497 constitute an intramembrane region (helical); that stretch reads CIGLAALTPWAIVPAAFGYWL. Over 1498–2173 the chain is Cytoplasmic; it reads TLKTTKRGGV…RMALEELPDA (676 aa). Positions 1505-1682 constitute a Peptidase S7 domain; the sequence is GGVFWDTPSP…DRQEEPVPEA (178 aa). Catalysis depends on charge relay system; for serine protease NS3 activity residues H1555, D1579, and S1639. The Helicase ATP-binding domain maps to 1685-1841; the sequence is PNMLRKRQMT…DSNAPIHDLQ (157 aa). An important for RNA-binding region spans residues 1689-1692; that stretch reads RKRQ. An ATP-binding site is contributed by 1698–1705; the sequence is LHPGSGKT. Positions 1789-1792 match the DEAH box motif; it reads DEAH. The 166-residue stretch at 1852–2017 folds into the Helicase C-terminal domain; it reads GYEWITEYAG…GLVAQLYGPE (166 aa). N6-acetyllysine; by host is present on K1893. The disordered stretch occupies residues 1950–1972; it reads NPSPITSASAAQRRGRVGRNPNQ. The segment at 2168–2172 is regulates the ATPase activity of NS3 helicase; the sequence is EELPD. A helical membrane pass occupies residues 2174 to 2194; sequence LETITLIVAITVMTGGFFLLM. Topologically, residues 2195–2199 are lumenal; it reads MQRKG. An intramembrane region (helical) is located at residues 2200–2220; that stretch reads IGKMGLGALVLTLATFFLWAA. A topological domain (lumenal) is located at residue E2221. A helical transmembrane segment spans residues 2222–2242; the sequence is VPGTKIAGTLLIALLLMVVLI. Residues 2243–2257 lie on the Cytoplasmic side of the membrane; the sequence is PEPEKQRSQTDNQLA. The chain crosses the membrane as a helical span at residues 2258 to 2278; that stretch reads VFLICVLTVVGVVAANEYGML. Topologically, residues 2279–2311 are lumenal; the sequence is EKTKADLKSMFGGKTQASGLTGLPSMALDLRPA. The helical intramembrane region spans 2312–2332; sequence TAWALYGGSTVVLTPLLKHLI. Residues 2333-2368 lie on the Lumenal side of the membrane; sequence TSEYVTTSLASINSQAGSLFVLPRGVPFTDLDLTVG. Residues 2369-2389 form a helical membrane-spanning segment; it reads LVFLGCWGQITLTTFLTAMVL. At 2390 to 2444 the chain is on the cytoplasmic side; the sequence is ATLHYGYMLPGWQAEALRAAQRRTAAGIMKNAVVDGMVATDVPELERTTPLMQKK. Residues 2445–2465 traverse the membrane as a helical segment; sequence VGQVLLIGVSVAAFLVNPNVT. Topologically, residues 2466 to 2469 are lumenal; that stretch reads TVRE. Residues 2470–2490 form a helical membrane-spanning segment; it reads AGVLVTAATLTLWDNGASAVW. Residues 2491-3432 lie on the Cytoplasmic side of the membrane; that stretch reads NSTTATGLCH…DVLIQEDRVI (942 aa). Residues 2528–2793 enclose the mRNA cap 0-1 NS5-type MT domain; it reads GRPGGRTLGE…DVNLGSGTRA (266 aa). S2583 is an S-adenosyl-L-methionine binding site. Phosphoserine is present on S2583. The For 2'-O-MTase activity role is filled by K2588. G2613, W2614, T2631, K2632, D2658, and V2659 together coordinate S-adenosyl-L-methionine. Catalysis depends on D2673, which acts as the For 2'-O-MTase activity. Position 2674 (I2674) interacts with S-adenosyl-L-methionine. Residues K2709 and E2745 each act as for 2'-O-MTase activity in the active site. An S-adenosyl-L-methionine-binding site is contributed by Y2747. Residues E2967, H2971, C2976, and C2979 each contribute to the Zn(2+) site. The RdRp catalytic domain occupies 3057-3209; the sequence is GKMYADDTAG…KPLDDRFATA (153 aa). Residues H3244, C3260, and C3379 each contribute to the Zn(2+) site.

It in the N-terminal section; belongs to the class I-like SAM-binding methyltransferase superfamily. mRNA cap 0-1 NS5-type methyltransferase family. Homodimer. Interacts (via N-terminus) with host EXOC1 (via C-terminus); this interaction results in EXOC1 degradation through the proteasome degradation pathway. As to quaternary structure, forms heterodimers with envelope protein E in the endoplasmic reticulum and Golgi. In terms of assembly, homodimer; in the endoplasmic reticulum and Golgi. Interacts with protein prM. Interacts with non-structural protein 1. Interacts with host HSPA5. Homodimer; Homohexamer when secreted. Interacts with envelope protein E. NS1 interacts with NS4B. Interacts with host complement protein CFH; this interaction leads to the degradation of C3. As to quaternary structure, interacts (via N-terminus) with serine protease NS3. In terms of assembly, forms a heterodimer with serine protease NS3. May form homooligomers. Forms a heterodimer with NS2B. Interacts with non-structural protein 2A (via N-terminus). Interacts with NS4B. Interacts with unphosphorylated RNA-directed RNA polymerase NS5; this interaction stimulates RNA-directed RNA polymerase NS5 guanylyltransferase activity. Interacts with host ILF2. As to quaternary structure, interacts with serine protease NS3. In terms of assembly, homodimer. Interacts with host STAT2; this interaction inhibits the phosphorylation of the latter, and, when all viral proteins are present (polyprotein), targets STAT2 for degradation. Interacts with serine protease NS3. The cofactor is Mn(2+). Mg(2+) is required as a cofactor. Post-translationally, specific enzymatic cleavages in vivo yield mature proteins. Cleavages in the lumen of endoplasmic reticulum are performed by host signal peptidase, whereas cleavages in the cytoplasmic side are performed by serine protease NS3. Signal cleavage at the 2K-4B site requires a prior NS3 protease-mediated cleavage at the 4A-2K site. In terms of processing, cleaved in post-Golgi vesicles by a host furin, releasing the mature small envelope protein M, and peptide pr. This cleavage is incomplete as up to 30% of viral particles still carry uncleaved prM. N-glycosylated. Post-translationally, N-glycosylated. The excreted form is glycosylated and this is required for efficient secretion of the protein from infected cells. In terms of processing, acetylated by host KAT5. Acetylation modulates NS3 RNA-binding and unwinding activities and plays an important positive role for viral replication. Phosphorylated on serines residues. This phosphorylation may trigger NS5 nuclear localization.

Its subcellular location is the virion. The protein localises to the host nucleus. The protein resides in the host cytoplasm. It is found in the host perinuclear region. It localises to the secreted. Its subcellular location is the virion membrane. The protein localises to the host endoplasmic reticulum membrane. The protein resides in the host cell surface. The enzyme catalyses Selective hydrolysis of -Xaa-Xaa-|-Yaa- bonds in which each of the Xaa can be either Arg or Lys and Yaa can be either Ser or Ala.. It catalyses the reaction RNA(n) + a ribonucleoside 5'-triphosphate = RNA(n+1) + diphosphate. The catalysed reaction is a ribonucleoside 5'-triphosphate + H2O = a ribonucleoside 5'-diphosphate + phosphate + H(+). It carries out the reaction ATP + H2O = ADP + phosphate + H(+). The enzyme catalyses a 5'-end (5'-triphosphoguanosine)-ribonucleoside in mRNA + S-adenosyl-L-methionine = a 5'-end (N(7)-methyl 5'-triphosphoguanosine)-ribonucleoside in mRNA + S-adenosyl-L-homocysteine. It catalyses the reaction a 5'-end (N(7)-methyl 5'-triphosphoguanosine)-ribonucleoside in mRNA + S-adenosyl-L-methionine = a 5'-end (N(7)-methyl 5'-triphosphoguanosine)-(2'-O-methyl-ribonucleoside) in mRNA + S-adenosyl-L-homocysteine + H(+). Plays a role in virus budding by binding to the cell membrane and gathering the viral RNA into a nucleocapsid that forms the core of a mature virus particle. During virus entry, may induce genome penetration into the host cytoplasm after hemifusion induced by the surface proteins. Can migrate to the cell nucleus where it modulates host functions. Overcomes the anti-viral effects of host EXOC1 by sequestering and degrading the latter through the proteasome degradation pathway. Its function is as follows. Inhibits RNA silencing by interfering with host Dicer. Functionally, prevents premature fusion activity of envelope proteins in trans-Golgi by binding to envelope protein E at pH6.0. After virion release in extracellular space, gets dissociated from E dimers. In terms of biological role, acts as a chaperone for envelope protein E during intracellular virion assembly by masking and inactivating envelope protein E fusion peptide. prM is the only viral peptide matured by host furin in the trans-Golgi network probably to avoid catastrophic activation of the viral fusion activity in acidic Golgi compartment prior to virion release. prM-E cleavage is inefficient, and many virions are only partially matured. These uncleaved prM would play a role in immune evasion. May play a role in virus budding. Exerts cytotoxic effects by activating a mitochondrial apoptotic pathway through M ectodomain. May display a viroporin activity. Its function is as follows. Binds to host cell surface receptor and mediates fusion between viral and cellular membranes. Efficient virus attachment to cell is, at least in part, mediated by host HSPA5. Envelope protein is synthesized in the endoplasmic reticulum in the form of heterodimer with protein prM. They play a role in virion budding in the ER, and the newly formed immature particle is covered with 60 spikes composed of heterodimer between precursor prM and envelope protein E. The virion is transported to the Golgi apparatus where the low pH causes dissociation of PrM-E heterodimers and formation of E homodimers. prM-E cleavage is inefficient, and many virions are only partially matured. These uncleaved prM would play a role in immune evasion. Functionally, involved in immune evasion, pathogenesis and viral replication. Once cleaved off the polyprotein, is targeted to three destinations: the viral replication cycle, the plasma membrane and the extracellular compartment. Essential for viral replication. Required for formation of the replication complex and recruitment of other non-structural proteins to the ER-derived membrane structures. Excreted as a hexameric lipoparticle that plays a role against host immune response. Antagonizing the complement function. Binds to the host macrophages and dendritic cells. Inhibits signal transduction originating from Toll-like receptor 3 (TLR3). In terms of biological role, component of the viral RNA replication complex that functions in virion assembly and antagonizes the host alpha/beta interferon antiviral response. Required cofactor for the serine protease function of NS3. May have membrane-destabilizing activity and form viroporins. Its function is as follows. Displays three enzymatic activities: serine protease, NTPase and RNA helicase. NS3 serine protease, in association with NS2B, performs its autocleavage and cleaves the polyprotein at dibasic sites in the cytoplasm: C-prM, NS2A-NS2B, NS2B-NS3, NS3-NS4A, NS4A-2K and NS4B-NS5. NS3 RNA helicase binds RNA and unwinds dsRNA in the 3' to 5' direction. Functionally, regulates the ATPase activity of the NS3 helicase activity. NS4A allows NS3 helicase to conserve energy during unwinding. In terms of biological role, functions as a signal peptide for NS4B and is required for the interferon antagonism activity of the latter. Induces the formation of ER-derived membrane vesicles where the viral replication takes place. Inhibits interferon (IFN)-induced host STAT1 phosphorylation and nuclear translocation, thereby preventing the establishment of cellular antiviral state by blocking the IFN-alpha/beta pathway. Inhibits STAT2 translocation in the nucleus after IFN-alpha treatment. Its function is as follows. Replicates the viral (+) and (-) RNA genome. Performs the capping of genomes in the cytoplasm. NS5 methylates viral RNA cap at guanine N-7 and ribose 2'-O positions. Besides its role in RNA genome replication, also prevents the establishment of cellular antiviral state by blocking the interferon-alpha/beta (IFN-alpha/beta) signaling pathway. Inhibits host TYK2 and STAT2 phosphorylation, thereby preventing activation of JAK-STAT signaling pathway. This is Genome polyprotein from Ardeidae (herons).